The sequence spans 397 residues: Elongation factor Tu (397 aa).

One can recognise a tr-type G domain in the interval 10–206; sequence KPHVNIGTIG…HIDTYIPEPT (197 aa). Residues 19–26 are G1; that stretch reads GHVDHGKT. Residue 19-26 coordinates GTP; it reads GHVDHGKT. Thr-26 contributes to the Mg(2+) binding site. The interval 61-65 is G2; that stretch reads GITIS. The G3 stretch occupies residues 82 to 85; the sequence is DCPG. GTP contacts are provided by residues 82–86 and 137–140; these read DCPGH and NKCD. Residues 137 to 140 form a G4 region; it reads NKCD. The G5 stretch occupies residues 175–177; the sequence is SAL.

The protein belongs to the TRAFAC class translation factor GTPase superfamily. Classic translation factor GTPase family. EF-Tu/EF-1A subfamily. Monomer.

Its subcellular location is the cytoplasm. It catalyses the reaction GTP + H2O = GDP + phosphate + H(+). GTP hydrolase that promotes the GTP-dependent binding of aminoacyl-tRNA to the A-site of ribosomes during protein biosynthesis. This chain is Elongation factor Tu, found in Alkaliphilus oremlandii (strain OhILAs) (Clostridium oremlandii (strain OhILAs)).